Reading from the N-terminus, the 513-residue chain is Exoglucanase 1 (513 aa).

Residues 1-17 (MYRKLAVISAFLATARA) form the signal peptide. The residue at position 18 (Gln-18) is a Pyrrolidone carboxylic acid. Positions 18–453 (QSACTLQSET…GSTGNPSGGN (436 aa)) are catalytic. Disulfide bonds link Cys-21-Cys-89, Cys-36-Cys-42, Cys-67-Cys-88, Cys-78-Cys-84, Cys-155-Cys-414, Cys-189-Cys-227, Cys-193-Cys-226, Cys-247-Cys-273, Cys-255-Cys-260, and Cys-278-Cys-348. Asn-62 carries N-linked (GlcNAc) asparagine glycosylation. Catalysis depends on Glu-229, which acts as the Nucleophile. Glu-234 functions as the Proton donor/acceptor in the catalytic mechanism. N-linked (GlcNAc) asparagine glycosylation is found at Asn-287 and Asn-401. Residues 401 to 437 (NETSSTPGAVRGSCSTSSGVPAQVESQSPNAKVTFSN) show a composition bias toward polar residues. The tract at residues 401–480 (NETSSTPGAV…TGSSPGPTQS (80 aa)) is disordered. Positions 449-459 (PSGGNPPGGNR) are enriched in gly residues. The segment at 454-477 (PPGGNRGTTTTRRPATTTGSSPGP) is linker. The segment covering 460-478 (GTTTTRRPATTTGSSPGPT) has biased composition (low complexity). O-linked (Man) threonine glycosylation occurs at Thr-461. O-linked (Man...) threonine glycans are attached at residues Thr-462, Thr-463, and Thr-464. A glycan (O-linked (Man) threonine) is linked at Thr-469. O-linked (Man...) threonine glycosylation is found at Thr-470 and Thr-471. O-linked (Man) serine glycans are attached at residues Ser-473 and Ser-474. A CBM1 domain is found at 477 to 513 (PTQSHYGQCGGIGYSGPTVCASGTTCQVLNPYYSQCL). O-linked (Man) threonine glycosylation occurs at Thr-478. Ser-480 and Ser-491 each carry an O-linked (Man) serine glycan. 2 disulfides stabilise this stretch: Cys-485–Cys-502 and Cys-496–Cys-512.

The protein belongs to the glycosyl hydrolase 7 (cellulase C) family. N-glycosylated. The catalytic core domain comprises three N-linked glycans which each consist of a single N-acetylglucosamine residue. In terms of processing, O-glycosylated. Within the linker domain, all 8 threonines are variably glycosylated with between at least one, and up to three, mannose residues per site. All serines in this domain are at least partially glycosylated with a single mannose residue. O-glycosylation of the cellulase linker provides protection from proteolysis. Linker glycans also contribute to binding affinity of cellobiohydrolases to cellulose.

The protein resides in the secreted. The enzyme catalyses Hydrolysis of (1-&gt;4)-beta-D-glucosidic linkages in cellulose and cellotetraose, releasing cellobiose from the non-reducing ends of the chains.. Its function is as follows. Exocellobiohydrolases (CBH) that catalyzes the hydrolysis of 1,4-beta-D-glucosidic bonds in cellulose to release the disaccharide cellobiose. The degradation of cellulose involves an interplay between different cellulolytic enzymes. Hydrolysis starts with endoglucanases (EGs), which cut internal beta-1,4-glucosidic bonds in cellulose to reduce the polymerization degree of the substrate and create new chain ends for exocellobiohydrolases (CBHs). The CBHs release the disaccharide cellobiose from the non-reducing end of the cellulose polymer chain. Finally, beta-1,4-glucosidases hydrolyze the cellobiose and other short cello-oligosaccharides into glucose units. The protein is Exoglucanase 1 (cbh1) of Hypocrea jecorina (Trichoderma reesei).